We begin with the raw amino-acid sequence, 402 residues long: Putative RNA-guided DNA endonuclease (402 aa).

D188 is a catalytic residue. The segment at 202-239 is disordered; sequence KITNPKHERRDRARLAKAQRDVSRKAKGSANRKKARRK. Basic and acidic residues predominate over residues 204-225; the sequence is TNPKHERRDRARLAKAQRDVSR. Positions 226 to 239 are enriched in basic residues; the sequence is KAKGSANRKKARRK. E272 is an active-site residue. Zn(2+) is bound by residues C325, C328, C344, and C346. D353 is an active-site residue. The tract at residues 373–402 is disordered; it reads GIRPQRESSRTGRSSVKQEPQRATAGIPRL.

In the N-terminal section; belongs to the transposase 2 family. It in the C-terminal section; belongs to the transposase 35 family.

Its function is as follows. An RNA-guided dsDNA endonuclease. When guided by an RNA derived from the right-end element of its insertion sequence element (IS), cleaves DNA downstream of the transposon-associated motif (TAM). Cleaves supercoiled and linear DNA in a staggered manner 15-21 bases from the TAM yielding 5'-overhangs. Binds reRNA, an approximately 150 nucleotide base sRNA derived from the 3' end of its own gene, the right end (RE) of the insertion sequence (IS) plus sequence downstream of the IS. This chain is Putative RNA-guided DNA endonuclease, found in Streptomyces pristinaespiralis.